A 35-amino-acid chain; its full sequence is uncharacterized protein (35 aa).

Residues 1–25 (MTERKLLQLLRRPFISLSLFTALRA) form the signal peptide.

This is an uncharacterized protein from Saccharomyces cerevisiae (strain ATCC 204508 / S288c) (Baker's yeast).